The following is an 85-amino-acid chain: ATP synthase subunit c (85 aa).

The next 2 membrane-spanning stretches (helical) occupy residues 1-21 (MLAW…ALVG) and 53-73 (LLFA…VALI).

It belongs to the ATPase C chain family. In terms of assembly, F-type ATPases have 2 components, F(1) - the catalytic core - and F(0) - the membrane proton channel. F(1) has five subunits: alpha(3), beta(3), gamma(1), delta(1), epsilon(1). F(0) has three main subunits: a(1), b(2) and c(10-14). The alpha and beta chains form an alternating ring which encloses part of the gamma chain. F(1) is attached to F(0) by a central stalk formed by the gamma and epsilon chains, while a peripheral stalk is formed by the delta and b chains.

It is found in the cell inner membrane. F(1)F(0) ATP synthase produces ATP from ADP in the presence of a proton or sodium gradient. F-type ATPases consist of two structural domains, F(1) containing the extramembraneous catalytic core and F(0) containing the membrane proton channel, linked together by a central stalk and a peripheral stalk. During catalysis, ATP synthesis in the catalytic domain of F(1) is coupled via a rotary mechanism of the central stalk subunits to proton translocation. In terms of biological role, key component of the F(0) channel; it plays a direct role in translocation across the membrane. A homomeric c-ring of between 10-14 subunits forms the central stalk rotor element with the F(1) delta and epsilon subunits. The chain is ATP synthase subunit c from Dictyoglomus turgidum (strain DSM 6724 / Z-1310).